We begin with the raw amino-acid sequence, 47 residues long: Protein DVU_0533 (47 aa).

Residues 18 to 37 traverse the membrane as a helical segment; the sequence is WTYILMGVTLLVYVGYWLFL.

The protein resides in the cell membrane. HMWC (high-molecular-weight cytochrome c), ORF2, ORF3, ORF4, ORF5 and ORF6 in the HMC operon form a transmembrane protein complex that allows electron flow from the periplasmic hydrogenase to the cytoplasmic enzymes that catalyze reduction of sulfates. In Nitratidesulfovibrio vulgaris (strain ATCC 29579 / DSM 644 / CCUG 34227 / NCIMB 8303 / VKM B-1760 / Hildenborough) (Desulfovibrio vulgaris), this protein is Protein DVU_0533.